The sequence spans 576 residues: Arginine--tRNA ligase (576 aa).

The short motif at 122-132 (PNVAKQMHVGH) is the 'HIGH' region element.

The protein belongs to the class-I aminoacyl-tRNA synthetase family. In terms of assembly, monomer.

It localises to the cytoplasm. It catalyses the reaction tRNA(Arg) + L-arginine + ATP = L-arginyl-tRNA(Arg) + AMP + diphosphate. In Photorhabdus laumondii subsp. laumondii (strain DSM 15139 / CIP 105565 / TT01) (Photorhabdus luminescens subsp. laumondii), this protein is Arginine--tRNA ligase.